The primary structure comprises 329 residues: Lipoyl synthase (329 aa).

[4Fe-4S] cluster-binding residues include C55, C60, C66, C81, C85, C88, and S292. Residues 67 to 281 (WEDREATFLI…RDEAEAIGFL (215 aa)) enclose the Radical SAM core domain.

This sequence belongs to the radical SAM superfamily. Lipoyl synthase family. [4Fe-4S] cluster is required as a cofactor.

It localises to the cytoplasm. The enzyme catalyses [[Fe-S] cluster scaffold protein carrying a second [4Fe-4S](2+) cluster] + N(6)-octanoyl-L-lysyl-[protein] + 2 oxidized [2Fe-2S]-[ferredoxin] + 2 S-adenosyl-L-methionine + 4 H(+) = [[Fe-S] cluster scaffold protein] + N(6)-[(R)-dihydrolipoyl]-L-lysyl-[protein] + 4 Fe(3+) + 2 hydrogen sulfide + 2 5'-deoxyadenosine + 2 L-methionine + 2 reduced [2Fe-2S]-[ferredoxin]. The protein operates within protein modification; protein lipoylation via endogenous pathway; protein N(6)-(lipoyl)lysine from octanoyl-[acyl-carrier-protein]: step 2/2. Catalyzes the radical-mediated insertion of two sulfur atoms into the C-6 and C-8 positions of the octanoyl moiety bound to the lipoyl domains of lipoate-dependent enzymes, thereby converting the octanoylated domains into lipoylated derivatives. This chain is Lipoyl synthase, found in Leifsonia xyli subsp. xyli (strain CTCB07).